Reading from the N-terminus, the 725-residue chain is Catalase-peroxidase (725 aa).

Residues 88 to 211 constitute a cross-link (tryptophyl-tyrosyl-methioninium (Trp-Tyr) (with M-237)); sequence WHSAGTYRIQ…LAASEMGLIY (124 aa). The active-site Proton acceptor is His89. Residues 211–237 constitute a cross-link (tryptophyl-tyrosyl-methioninium (Tyr-Met) (with W-88)); it reads YVNPEGPGREPDPLKAAQQIRETFKRM. Residue His252 participates in heme b binding.

Belongs to the peroxidase family. Peroxidase/catalase subfamily. In terms of assembly, homodimer or homotetramer. Requires heme b as cofactor. Post-translationally, formation of the three residue Trp-Tyr-Met cross-link is important for the catalase, but not the peroxidase activity of the enzyme.

It carries out the reaction H2O2 + AH2 = A + 2 H2O. The catalysed reaction is 2 H2O2 = O2 + 2 H2O. Functionally, bifunctional enzyme with both catalase and broad-spectrum peroxidase activity. The chain is Catalase-peroxidase from Symbiobacterium thermophilum (strain DSM 24528 / JCM 14929 / IAM 14863 / T).